The chain runs to 247 residues: Anamorsin homolog (247 aa).

Residues Phe-4–Phe-128 are N-terminal SAM-like domain. The tract at residues Ala-129 to Lys-160 is linker. [2Fe-2S] cluster is bound by residues Cys-171, Cys-180, Cys-183, and Cys-185. Residues Cys-171–Cys-185 form a fe-S binding site A region. Cys-208, Cys-211, Cys-219, and Cys-222 together coordinate [4Fe-4S] cluster. Short sequence motifs (cx2C motif) lie at residues Cys-208–Cys-211 and Cys-219–Cys-222. Residues Cys-208–Cys-222 are fe-S binding site B.

This sequence belongs to the anamorsin family. As to quaternary structure, monomer. [2Fe-2S] cluster is required as a cofactor. It depends on [4Fe-4S] cluster as a cofactor.

The protein localises to the cytoplasm. The protein resides in the mitochondrion intermembrane space. Functionally, component of the cytosolic iron-sulfur (Fe-S) protein assembly (CIA) machinery. Required for the maturation of extramitochondrial Fe-S proteins. Part of an electron transfer chain functioning in an early step of cytosolic Fe-S biogenesis, facilitating the de novo assembly of a [4Fe-4S] cluster on the cytosolic Fe-S scaffold complex. Electrons are transferred from NADPH via a FAD- and FMN-containing diflavin oxidoreductase. Together with the diflavin oxidoreductase, also required for the assembly of the diferric tyrosyl radical cofactor of ribonucleotide reductase (RNR), probably by providing electrons for reduction during radical cofactor maturation in the catalytic small subunit. In Drosophila persimilis (Fruit fly), this protein is Anamorsin homolog.